Consider the following 325-residue polypeptide: Mitochondrial citrate transporter C (325 aa).

Solcar repeat units lie at residues 15 to 105, 117 to 208, and 221 to 310; these read ASPA…YKQM, KATF…LKAF, and LPSY…LKGK. 6 helical membrane passes run 21 to 41, 82 to 102, 121 to 141, 187 to 207, 221 to 241, and 282 to 303; these read LIAG…LDTI, GAVL…YESY, LAGL…MEVV, TALR…ELKA, LPSY…PFSN, and FYKG…TFTV.

Belongs to the mitochondrial carrier (TC 2.A.29) family.

It localises to the mitochondrion inner membrane. In terms of biological role, mitochondrial transporter that does not mediate citrate export from mitochondria to cytoplasm. Its exact function has still to be determined. This is Mitochondrial citrate transporter C from Aspergillus niger (strain ATCC 1015 / CBS 113.46 / FGSC A1144 / LSHB Ac4 / NCTC 3858a / NRRL 328 / USDA 3528.7).